Consider the following 69-residue polypeptide: Sec-independent protein translocase protein TatA (69 aa).

Residues 1 to 21 (MFGLGGQELVLILLIVLLLFG) form a helical membrane-spanning segment. Basic and acidic residues predominate over residues 47–63 (EEEFNKSMDDNPKKEKA). Residues 47–69 (EEEFNKSMDDNPKKEKATTASKS) form a disordered region.

The protein belongs to the TatA/E family. As to quaternary structure, forms a complex with TatC.

The protein localises to the cell inner membrane. Functionally, part of the twin-arginine translocation (Tat) system that transports large folded proteins containing a characteristic twin-arginine motif in their signal peptide across membranes. TatA could form the protein-conducting channel of the Tat system. The sequence is that of Sec-independent protein translocase protein TatA from Chlorobium chlorochromatii (strain CaD3).